The following is a 332-amino-acid chain: Cell growth regulator with RING finger domain protein 1 (332 aa).

The RING-type zinc finger occupies 274 to 309 (CVVCQNGGVNWVLLPCRHACLCDSCVRYFKQCPMCR).

Its subcellular location is the nucleus. It is found in the endoplasmic reticulum. Its function is as follows. Able to inhibit growth in several cell lines. The protein is Cell growth regulator with RING finger domain protein 1 (Cgrrf1) of Mus musculus (Mouse).